The sequence spans 548 residues: BTB/POZ domain-containing protein At5g17580 (548 aa).

A BTB domain is found at 7–74 (SDLHINVKGV…CNGSEFKFTS (68 aa)). An NPH3 domain is found at 180–442 (DWKSEDLITI…VNVLCVSQLQ (263 aa)). Phosphotyrosine is present on Y383. Residues 442-493 (QIRDTVAKEIKGMEEKVDEEEEEEIEVSSDEDEMEKMSNKLLGLEIENDECV) are a coiled coil.

The protein belongs to the NPH3 family.

It participates in protein modification; protein ubiquitination. May act as a substrate-specific adapter of an E3 ubiquitin-protein ligase complex (CUL3-RBX1-BTB) which mediates the ubiquitination and subsequent proteasomal degradation of target proteins. The sequence is that of BTB/POZ domain-containing protein At5g17580 from Arabidopsis thaliana (Mouse-ear cress).